The chain runs to 195 residues: MNPVYSPASSGVPYANPKGIGYPAGFPVGYAAAAPAYSPSMYPGANPAFPSGYAPGTPFKMSCSPTTGAVPPYSSSPNPYPAAVYPVRSPYPQQNPYAQQQGTYYTQPLYAAPPHVIHHTTVVQPNGMPAAMYAPPIPPPRPNGVTMGMVGGTTMAMSAGTLLTTHSPTPVAPHPSMPTYRQPATPTYSYVPPQW.

The Cytoplasmic segment spans residues 1 to 18 (MNPVYSPASSGVPYANPK). The helical transmembrane segment at 19–43 (GIGYPAGFPVGYAAAAPAYSPSMYP) threads the bilayer. The Extracellular portion of the chain corresponds to 44–143 (GANPAFPSGY…APPIPPPRPN (100 aa)). Residues 144 to 163 (GVTMGMVGGTTMAMSAGTLL) traverse the membrane as a helical segment. Over 164-195 (TTHSPTPVAPHPSMPTYRQPATPTYSYVPPQW) the chain is Cytoplasmic.

The protein belongs to the FAM168 family.

It localises to the cytoplasm. The protein localises to the perinuclear region. Its subcellular location is the cell membrane. The protein resides in the cell projection. It is found in the axon. Functionally, inhibitor of neuronal axonal outgrowth. This chain is Myelin-associated neurite-outgrowth inhibitor (fam168b), found in Danio rerio (Zebrafish).